We begin with the raw amino-acid sequence, 512 residues long: rRNA N(6)-adenosine-methyltransferase ZCCHC4 (512 aa).

Zn(2+) contacts are provided by Cys39, His41, Cys63, Cys72, Cys124, Cys127, His139, and His142. Residues 39–81 (CPHGPTLLFVKVNQGKEETRKFYACSACRDRKDCNFFQWEDEK) form a GRF-type zinc finger. Residues 171 to 174 (QYLF), Arg201, Asp223, 241 to 242 (NM), and Asp274 contribute to the S-adenosyl-L-methionine site. Residues 335-355 (QVDYDNHALYKHGKTGRKQSP) form a regulatory loop region. Zn(2+) is bound by residues Cys378, Cys381, His391, Cys392, Cys395, Cys398, His408, Cys409, Cys412, Cys415, His422, Cys423, Cys426, Cys429, His434, and Cys436. One can recognise a DHHC domain in the interval 393 to 445 (VHCNSCTSKDGRKWSHCFLCKKCVKPSWIHCNTCNRCALPDHSCLGPKDGCFI). A CCHC-type zinc finger spans residues 441 to 458 (DGCFICGALDHKRSNCPN).

This sequence belongs to the ZCCHC4 family. Interacts with components of the ASC-1 complex TRIP4, ASCC1, ASCC2 and ASCC3. Interact with AHCYL1 and AHCYL2. Interact with YTHDC2.

Its subcellular location is the cytoplasm. It localises to the nucleus. The protein localises to the nucleolus. It carries out the reaction adenosine(4220) in 28S rRNA + S-adenosyl-L-methionine = N(6)-methyladenosine(4220) in 28S rRNA + S-adenosyl-L-homocysteine + H(+). Functionally, rRNA N6-methyltransferase that specifically methylates the adenine in position 4220 of 28S rRNA. N6-methylation of adenine(4220) in 28S rRNA is required for translation. This Mus musculus (Mouse) protein is rRNA N(6)-adenosine-methyltransferase ZCCHC4.